A 689-amino-acid polypeptide reads, in one-letter code: Glycine--tRNA ligase beta subunit (689 aa).

It belongs to the class-II aminoacyl-tRNA synthetase family. In terms of assembly, tetramer of two alpha and two beta subunits.

It is found in the cytoplasm. It carries out the reaction tRNA(Gly) + glycine + ATP = glycyl-tRNA(Gly) + AMP + diphosphate. The polypeptide is Glycine--tRNA ligase beta subunit (Acinetobacter baumannii (strain ACICU)).